A 132-amino-acid polypeptide reads, in one-letter code: Major pollen allergen Art v 1 (132 aa).

The first 24 residues, 1–24, serve as a signal peptide directing secretion; that stretch reads MAKCSYVFCAVLLIFIVAIGEMEA. Residues 28 to 77 form a defensin-like domain region; the sequence is KLCEKTSKTYSGKCDNKKCDKKCIEWEKAQHGACHKREAGKESCFCYFDC. 4 disulfide bridges follow: cysteine 30–cysteine 77, cysteine 41–cysteine 61, cysteine 46–cysteine 71, and cysteine 50–cysteine 73. 2 epitope recognized by IgE antibodies of mugwort pollen-sensitized patients regions span residues 64-70 and 79-87; these read REAGKES and KSPPGATPA. The interval 81-132 is disordered; the sequence is PPGATPAPPGAAPPPAAGGSPSPPADGGSPPPPADGGSPPVDGGSPPPPSTH. Over residues 83-114 the composition is skewed to pro residues; that stretch reads GATPAPPGAAPPPAAGGSPSPPADGGSPPPPA. Over residues 115 to 124 the composition is skewed to low complexity; it reads DGGSPPVDGG.

This sequence in the N-terminal section; belongs to the DEFL family. In terms of processing, the mature protein extracted from the plant exhibits an average rate of 76% of hydroxyprolines. O-glycosylated. O-linkage of 3 galactoses plus 9-16 or 21-23 arabinose residues attached on one or two hydroxyprolines.

It localises to the secreted. The protein is Major pollen allergen Art v 1 of Artemisia vulgaris (Mugwort).